Reading from the N-terminus, the 301-residue chain is 3-methyl-2-oxobutanoate hydroxymethyltransferase (301 aa).

Polar residues predominate over residues methionine 1–proline 12. Residues methionine 1–alanine 24 form a disordered region. Mg(2+) is bound by residues aspartate 82 and aspartate 121. Residues aspartate 82–serine 83, aspartate 121, and lysine 151 each bind 3-methyl-2-oxobutanoate. Glutamate 153 lines the Mg(2+) pocket. Glutamate 219 acts as the Proton acceptor in catalysis.

This sequence belongs to the PanB family. Homodecamer; pentamer of dimers. It depends on Mg(2+) as a cofactor.

It localises to the cytoplasm. The catalysed reaction is 3-methyl-2-oxobutanoate + (6R)-5,10-methylene-5,6,7,8-tetrahydrofolate + H2O = 2-dehydropantoate + (6S)-5,6,7,8-tetrahydrofolate. The protein operates within cofactor biosynthesis; (R)-pantothenate biosynthesis; (R)-pantoate from 3-methyl-2-oxobutanoate: step 1/2. Catalyzes the reversible reaction in which hydroxymethyl group from 5,10-methylenetetrahydrofolate is transferred onto alpha-ketoisovalerate to form ketopantoate. The chain is 3-methyl-2-oxobutanoate hydroxymethyltransferase from Paenarthrobacter aurescens (strain TC1).